The primary structure comprises 381 residues: Spindlin interactor and repressor of chromatin-binding protein (381 aa).

Lys-49 participates in a covalent cross-link: Glycyl lysine isopeptide (Lys-Gly) (interchain with G-Cter in SUMO2). Ser-122 and Ser-149 each carry phosphoserine. Residues 148–158 (PSLPSLESGQD) show a composition bias toward polar residues. A disordered region spans residues 148 to 170 (PSLPSLESGQDGQPDPISNPDPV). Glycyl lysine isopeptide (Lys-Gly) (interchain with G-Cter in SUMO2) cross-links involve residues Lys-190 and Lys-221. Disordered stretches follow at residues 203–270 (PVTP…TDGS), 285–320 (LRTT…LRGT), and 335–381 (AVSL…GSGV). Over residues 219–229 (RWKESPENEPA) the composition is skewed to basic and acidic residues. Phosphoserine is present on residues Ser-249 and Ser-252. Residues 288–299 (TDCKDSSKDSRA) are compositionally biased toward basic and acidic residues. Residues Lys-291 and Lys-295 each participate in a glycyl lysine isopeptide (Lys-Gly) (interchain with G-Cter in SUMO2) cross-link. Residues 304-315 (PQPQNPSSASPP) are compositionally biased toward low complexity. Ser-310 and Ser-313 each carry phosphoserine.

In terms of assembly, interacts with SPIN1, SPIN2A, SPIN2B, SPIN3 and SPIN4. Interacts with TCF7L2 in a SPIN1-dependent manner. Interacts with PARP1; promoting PARP1 ADP-ribosyltransferase activity.

The protein resides in the nucleus. The protein localises to the chromosome. In terms of biological role, chromatin protein that stabilizes SPIN1 and enhances its association with histone H3 trimethylated at both 'Lys-4' and 'Lys-9' (H3K4me3K9me3). Positively regulates poly-ADP-ribosylation in response to DNA damage; acts by facilitating PARP1 ADP-ribosyltransferase activity. This Mus musculus (Mouse) protein is Spindlin interactor and repressor of chromatin-binding protein.